A 301-amino-acid chain; its full sequence is Ribosomal protein L11 methyltransferase (301 aa).

The S-adenosyl-L-methionine site is built by Thr-146, Gly-167, Asp-189, and Asn-237.

It belongs to the methyltransferase superfamily. PrmA family.

It is found in the cytoplasm. The catalysed reaction is L-lysyl-[protein] + 3 S-adenosyl-L-methionine = N(6),N(6),N(6)-trimethyl-L-lysyl-[protein] + 3 S-adenosyl-L-homocysteine + 3 H(+). Functionally, methylates ribosomal protein L11. The polypeptide is Ribosomal protein L11 methyltransferase (Prochlorococcus marinus (strain MIT 9303)).